A 411-amino-acid polypeptide reads, in one-letter code: S-inosyl-L-homocysteine hydrolase (411 aa).

D121 and E146 together coordinate substrate. 147–149 (TTT) is a binding site for NAD(+). The substrate site is built by K176 and D180. Residues N181, 210 to 215 (GYGWCG), E233, N268, 289 to 291 (SGH), and N335 contribute to the NAD(+) site.

The protein belongs to the adenosylhomocysteinase family. The cofactor is NAD(+).

It localises to the cytoplasm. The catalysed reaction is S-inosyl-L-homocysteine + H2O = L-homocysteine + inosine. The protein operates within amino-acid biosynthesis; S-adenosyl-L-methionine biosynthesis. Its function is as follows. Catalyzes the hydrolysis of S-inosyl-L-homocysteine (SIH) to L-homocysteine (Hcy) and inosine. Likely functions in a S-adenosyl-L-methionine (SAM) recycling pathway from S-adenosyl-L-homocysteine (SAH) produced from SAM-dependent methylation reactions. Can also catalyze the reverse reaction in vitro, i.e. the synthesis of SIH from Hcy and inosine. This Methanosarcina mazei (strain ATCC BAA-159 / DSM 3647 / Goe1 / Go1 / JCM 11833 / OCM 88) (Methanosarcina frisia) protein is S-inosyl-L-homocysteine hydrolase.